The sequence spans 313 residues: NAD-capped RNA hydrolase NudC (313 aa).

A substrate-binding site is contributed by Arg-111. In terms of domain architecture, Nudix hydrolase spans Pro-168–Leu-293. Ala-202, Glu-218, and Glu-222 together coordinate a divalent metal cation. A Nudix box motif is present at residues Gly-203–Gly-224. A substrate-binding site is contributed by Gln-236 to Ser-243. Glu-264 contributes to the a divalent metal cation binding site.

It belongs to the Nudix hydrolase family. NudC subfamily. Homodimer. Mg(2+) is required as a cofactor. It depends on Mn(2+) as a cofactor.

It carries out the reaction a 5'-end NAD(+)-phospho-ribonucleoside in mRNA + H2O = a 5'-end phospho-adenosine-phospho-ribonucleoside in mRNA + beta-nicotinamide D-ribonucleotide + 2 H(+). The enzyme catalyses NAD(+) + H2O = beta-nicotinamide D-ribonucleotide + AMP + 2 H(+). The catalysed reaction is NADH + H2O = reduced beta-nicotinamide D-ribonucleotide + AMP + 2 H(+). Functionally, mRNA decapping enzyme that specifically removes the nicotinamide adenine dinucleotide (NAD) cap from a subset of mRNAs by hydrolyzing the diphosphate linkage to produce nicotinamide mononucleotide (NMN) and 5' monophosphate mRNA. The NAD-cap is present at the 5'-end of some mRNAs and stabilizes RNA against 5'-processing. Has preference for mRNAs with a 5'-end purine. Catalyzes the hydrolysis of a broad range of dinucleotide pyrophosphates. The polypeptide is NAD-capped RNA hydrolase NudC (Mycobacterium tuberculosis (strain ATCC 25177 / H37Ra)).